A 272-amino-acid polypeptide reads, in one-letter code: F-actin-capping protein subunit beta (272 aa).

The protein belongs to the F-actin-capping protein beta subunit family. As to quaternary structure, component of the F-actin capping complex, composed of a heterodimer of an alpha and a beta subunit.

It is found in the cytoplasm. It localises to the cytoskeleton. In terms of biological role, F-actin-capping proteins bind in a Ca(2+)-independent manner to the fast growing ends of actin filaments (barbed end) thereby blocking the exchange of subunits at these ends. Unlike other capping proteins (such as gelsolin and severin), these proteins do not sever actin filaments. This Dictyostelium discoideum (Social amoeba) protein is F-actin-capping protein subunit beta (acpA).